The primary structure comprises 246 residues: YjeF N-terminal domain-containing 3 (246 aa).

Positions 24-234 constitute a YjeF N-terminal domain; sequence VATVETELLR…DIQKKYELNL (211 aa).

In terms of assembly, interacts with apoa1a. Binds to high-density lipoprotein.

In terms of biological role, accelerates cholesterol efflux from endothelial cells to high-density lipoprotein (HDL) and thereby regulates angiogenesis. Orchestrates hematopoietic stem and progenitor cell emergence from the hemogenic endothelium, a type of specialized endothelium manifesting hematopoietic potential. YJEFN3-mediated cholesterol efflux activates endothelial SREBF2, the master transcription factor for cholesterol biosynthesis, which in turn transactivates NOTCH and promotes hematopoietic stem and progenitor cell emergence. This chain is YjeF N-terminal domain-containing 3, found in Danio rerio (Zebrafish).